Reading from the N-terminus, the 220-residue chain is UPF0319 protein YccT (220 aa).

A signal peptide spans 1-20; sequence MKTGALATFLALCLPATVFA.

Belongs to the UPF0319 family.

The chain is UPF0319 protein YccT from Salmonella heidelberg (strain SL476).